Reading from the N-terminus, the 351-residue chain is DNA polymerase IV (351 aa).

The UmuC domain occupies I4 to G185. 2 residues coordinate Mg(2+): D8 and D103. The active site involves E104.

It belongs to the DNA polymerase type-Y family. As to quaternary structure, monomer. Mg(2+) is required as a cofactor.

The protein localises to the cytoplasm. The enzyme catalyses DNA(n) + a 2'-deoxyribonucleoside 5'-triphosphate = DNA(n+1) + diphosphate. Functionally, poorly processive, error-prone DNA polymerase involved in untargeted mutagenesis. Copies undamaged DNA at stalled replication forks, which arise in vivo from mismatched or misaligned primer ends. These misaligned primers can be extended by PolIV. Exhibits no 3'-5' exonuclease (proofreading) activity. May be involved in translesional synthesis, in conjunction with the beta clamp from PolIII. This chain is DNA polymerase IV, found in Escherichia coli O139:H28 (strain E24377A / ETEC).